The primary structure comprises 592 residues: Alpha-1,3-galactosidase B (592 aa).

The signal sequence occupies residues 1–14 (MKLLSVLSLSLVLS). C15 carries N-palmitoyl cysteine lipidation. The S-diacylglycerol cysteine moiety is linked to residue C15. PbH1 repeat units follow at residues 429-451 (TPEV…LFST), 452-474 (PRKT…LLCG), and 485-538 (CRHV…VIED).

It belongs to the glycosyl hydrolase 110 family. B subfamily.

It localises to the cell membrane. It carries out the reaction Hydrolysis of terminal, non-reducing branched (1-&gt;3)-alpha-D-galactosidic residues, producing free D-galactose.. It catalyses the reaction Hydrolysis of terminal, non-reducing linear (1-&gt;3)-alpha-D-galactosidic residues, producing free D-galactose.. The enzyme catalyses Hydrolysis of terminal, non-reducing alpha-D-galactose residues in alpha-D-galactosides, including galactose oligosaccharides, galactomannans and galactolipids.. In terms of biological role, alpha-galactosidase. Removes both branched alpha-1,3-linked galactose residues of blood group B antigens and linear alpha-1,3-linked galactose structures. The sequence is that of Alpha-1,3-galactosidase B (glaB1) from Phocaeicola vulgatus (strain ATCC 8482 / DSM 1447 / JCM 5826 / CCUG 4940 / NBRC 14291 / NCTC 11154) (Bacteroides vulgatus).